A 545-amino-acid chain; its full sequence is Chaperonin GroEL (545 aa).

ATP is bound by residues 30 to 33 (TMGP), K51, 87 to 91 (DGTTT), G416, 479 to 481 (NAA), and D495.

This sequence belongs to the chaperonin (HSP60) family. Forms a cylinder of 14 subunits composed of two heptameric rings stacked back-to-back. Interacts with the co-chaperonin GroES.

It is found in the cytoplasm. The catalysed reaction is ATP + H2O + a folded polypeptide = ADP + phosphate + an unfolded polypeptide.. Functionally, together with its co-chaperonin GroES, plays an essential role in assisting protein folding. The GroEL-GroES system forms a nano-cage that allows encapsulation of the non-native substrate proteins and provides a physical environment optimized to promote and accelerate protein folding. The chain is Chaperonin GroEL from Nautilia profundicola (strain ATCC BAA-1463 / DSM 18972 / AmH).